Reading from the N-terminus, the 60-residue chain is UPF0509 protein Ent638_2183 (60 aa).

This sequence belongs to the UPF0509 family.

This chain is UPF0509 protein Ent638_2183, found in Enterobacter sp. (strain 638).